Consider the following 844-residue polypeptide: DNA mismatch repair protein MutS (844 aa).

602-609 (GPNMSGKS) is a binding site for ATP.

Belongs to the DNA mismatch repair MutS family.

In terms of biological role, this protein is involved in the repair of mismatches in DNA. It is possible that it carries out the mismatch recognition step. This protein has a weak ATPase activity. In Streptococcus pneumoniae serotype 19F (strain G54), this protein is DNA mismatch repair protein MutS.